The primary structure comprises 582 residues: 15-cis-phytoene desaturase, chloroplastic/chromoplastic (582 aa).

A chloroplast and chromoplast-targeting transit peptide spans 1–110; sequence MPQIGLVSAV…FRSSPRPTKP (110 aa). FAD-binding positions include 140 to 141, Lys-148, 165 to 166, and Tyr-171; these read EA and HI. Arg-306 contributes to the substrate binding site. Residues Ile-348 and Asp-537 each contribute to the FAD site. Ala-545 contacts substrate. Met-547 is an FAD binding site.

This sequence belongs to the carotenoid/retinoid oxidoreductase family. In terms of assembly, homotetramer. The cofactor is FAD.

It is found in the plastid. The protein resides in the chloroplast. Its subcellular location is the chromoplast. The protein localises to the membrane. It catalyses the reaction 2 a plastoquinone + 15-cis-phytoene = 9,9',15-tri-cis-zeta-carotene + 2 a plastoquinol. It participates in carotenoid biosynthesis; lycopene biosynthesis. Inhibited by the herbicides metflurazon, difunone, fluridone and diflufenican. Its function is as follows. Converts phytoene into zeta-carotene via the intermediary of phytofluene by the symmetrical introduction of two double bonds at the C-11 and C-11' positions of phytoene with a concomitant isomerization of two neighboring double bonds at the C9 and C9' positions from trans to cis. The chain is 15-cis-phytoene desaturase, chloroplastic/chromoplastic (PDS) from Capsicum annuum (Capsicum pepper).